The following is a 357-amino-acid chain: Chorismate synthase (357 aa).

NADP(+) is bound by residues Arg48 and Arg54. FMN contacts are provided by residues 125 to 127 (RSS), 238 to 239 (NA), Gly278, 293 to 297 (KPTSS), and Arg319.

It belongs to the chorismate synthase family. In terms of assembly, homotetramer. Requires FMNH2 as cofactor.

It catalyses the reaction 5-O-(1-carboxyvinyl)-3-phosphoshikimate = chorismate + phosphate. The protein operates within metabolic intermediate biosynthesis; chorismate biosynthesis; chorismate from D-erythrose 4-phosphate and phosphoenolpyruvate: step 7/7. Catalyzes the anti-1,4-elimination of the C-3 phosphate and the C-6 proR hydrogen from 5-enolpyruvylshikimate-3-phosphate (EPSP) to yield chorismate, which is the branch point compound that serves as the starting substrate for the three terminal pathways of aromatic amino acid biosynthesis. This reaction introduces a second double bond into the aromatic ring system. The sequence is that of Chorismate synthase from Blochmanniella floridana.